A 160-amino-acid polypeptide reads, in one-letter code: Transcription elongation factor GreA (160 aa).

Residues Ser-49–Ala-75 adopt a coiled-coil conformation.

It belongs to the GreA/GreB family.

Necessary for efficient RNA polymerase transcription elongation past template-encoded arresting sites. The arresting sites in DNA have the property of trapping a certain fraction of elongating RNA polymerases that pass through, resulting in locked ternary complexes. Cleavage of the nascent transcript by cleavage factors such as GreA or GreB allows the resumption of elongation from the new 3'terminus. GreA releases sequences of 2 to 3 nucleotides. This Clostridium beijerinckii (strain ATCC 51743 / NCIMB 8052) (Clostridium acetobutylicum) protein is Transcription elongation factor GreA.